The following is a 284-amino-acid chain: uncharacterized protein (284 aa).

The segment covering M1 to S27 has biased composition (polar residues). Disordered stretches follow at residues M1 to E29 and T248 to K284.

This is an uncharacterized protein from Caenorhabditis elegans.